We begin with the raw amino-acid sequence, 1485 residues long: MIERGKFRSLTLVNWNGFFARTFDLDELVTTLSGGNGAGKSTTMAAFVTALIPDLTLLHFRNTTEAGATSGSRDKGLHGKLRAGVCYSTLDVVNSRHQRVVVGVRLQQVAGRDRKVDIKPFTIQGLPTAIQPTEILTELVAERQARVLSLPELKERVEAMEGVQFKQFNSITDYHSLMFDLGVIPKRLRSSADRSKFYRLIEASLYGGISSAITRSLRDYLLPENSGVRKAFQDMEAALRENRMTLEAIRVTQSDRDLFKHLISEATSYVAADYMRHANERRIHLDSALVLRRDLFSSRKQLVTEQYRHVEMSRELAEQSGAESDLETDYQAASDHLNLVQTAMRQQEKIERYQSDLEELTYRLEEQSEVVSEASEQQADNEARAEAAELEVDELKSQLADYQQALDVQQTRAIQYQQALQALERARALCQLPELTADNAEEWLETFHAKEQEATESLLQLEQKLSVADAAHSQFEQAYQLVVNIAGEVSRSEAWQTARELLRDWPSQQHLAERVQPLRMRLSELEQRLRAQQDAERLLQEFCKRQGNAYQPEELEALQRELESQVEELSLSVSDAGERRMAMRQELEQLKLKIQELTARAPVWLAAQDALSQLSEQSGEALEDSRQVTEYMQQLLERERETTVERDEIAASKRAIEAQIERLSQPSGAEDARLIALAERFGGVLLSEIYDDVTIDDAPYFSALYGPSRHGIVVPDLSLVREHLQGLDDCPEDLYLIEGDPQSFDDSVFAVEEHEKAVVVKIADRQWRYSRYPEVPLFGRAARENRLETLYQERDRLAERYATLSFDVQKTQRTHQAFSRFIGSHLAVAFDADPEAEIRLLNTRRGEIERALNAHEDQNQQQRQQFDQAKEGISALNRLIPLVSLLLDETLADRVEEITEELAEAQEAARYIQQHGVSLTKLEPLLSVLQSDPQQHEQLQESYVLAQNSQRLAKQQAFALTEVVQRRAHFSYTDSAGMLTENSDLNDKLRQRLEQAEAERTRAREQLRQYQSQFTQYSQVLASLKSSYDAKRDMLKELSQELVDIGVPADANAEARARARRDELHAALSTNRSRRNQLEKQLTFCEAEMDSLQKKLRKLERDYHQIREQVVNAKAGWCAVMRMVKDNGVERRLHRRELAYMDGDELRSMSDKALGALRLAVADNEHLRDVLRLSEDPKRPERKIQFYIAVYQHLRERIRQDIIRTDDPVEAIEQMEIELGRLTEELTAREQKLAISSKSVSNIIRKTIHREQNRIRMLNQGLQAVSFGQVKSVRLNVNVREAHATLLDVLSEQQEQHQDLFNSNRLTFSEALAKLYQRLNPQMDMGQRLPQTIGEELLDYRNYLELEVEVYRGADGWLRAESGALSTGEAIGTGMSILVMVVQSWEEESRRLRGKDISPCRLLFLDEAARLDAKSIATLFELCERLEMQLIIAAPENISPEKGTTYKLVRKVFQNHEHVHVVGLRGFANEMPSLPPIAAELQQGG.

ATP is bound at residue 34–41 (GGNGAGKS). Coiled-coil stretches lie at residues 337 to 480 (LNLV…QAYQ) and 509 to 605 (QHLA…PVWL). Residues 666–783 (PSGAEDARLI…EVPLFGRAAR (118 aa)) form a flexible hinge region. Coiled coils occupy residues 835-915 (EAEI…IQQH) and 977-1116 (GMLT…AKAG).

This sequence belongs to the SMC family. MukB subfamily. In terms of assembly, homodimerization via its hinge domain. Binds to DNA via its C-terminal region. Interacts, and probably forms a ternary complex, with MukE and MukF via its C-terminal region. The complex formation is stimulated by calcium or magnesium. Interacts with tubulin-related protein FtsZ.

Its subcellular location is the cytoplasm. It localises to the nucleoid. Plays a central role in chromosome condensation, segregation and cell cycle progression. Functions as a homodimer, which is essential for chromosome partition. Involved in negative DNA supercoiling in vivo, and by this means organize and compact chromosomes. May achieve or facilitate chromosome segregation by condensation DNA from both sides of a centrally located replisome during cell division. The sequence is that of Chromosome partition protein MukB from Yersinia pseudotuberculosis serotype IB (strain PB1/+).